The chain runs to 507 residues: Fatty acid resistance protein FarB (507 aa).

The next 14 helical transmembrane spans lie at 8–28, 52–72, 78–98, 109–129, 136–156, 164–184, 199–219, 233–253, 274–294, 303–323, 334–354, 363–383, 399–419, and 478–498; these read GAAL…EVLD, WVIT…GFLA, VKLF…CGIA, ILQG…LMAS, MLAL…GPIL, WHWG…AWIT, PTDY…QMML, IITL…WELG, IATS…PLVL, AWAG…SPLI, LLVT…TDFY, IWPQ…LTTI, LSNF…STLW, and IFLA…LAKP.

The protein belongs to the major facilitator superfamily. EmrB family. Probably part of a tripartite efflux system FarAB-MtrE, which is composed of an inner membrane transporter, FarB, a periplasmic membrane fusion protein, FarA, and an outer membrane component, MtrE.

It localises to the cell inner membrane. Its function is as follows. Mediates resistance to long-chained antibacterial fatty acids (FAs). Function is dependent on the MtrE outer membrane protein. This is Fatty acid resistance protein FarB from Neisseria gonorrhoeae.